Reading from the N-terminus, the 292-residue chain is ATP synthase gamma chain (292 aa).

It belongs to the ATPase gamma chain family. In terms of assembly, F-type ATPases have 2 components, CF(1) - the catalytic core - and CF(0) - the membrane proton channel. CF(1) has five subunits: alpha(3), beta(3), gamma(1), delta(1), epsilon(1). CF(0) has three main subunits: a, b and c.

It localises to the cell membrane. Produces ATP from ADP in the presence of a proton gradient across the membrane. The gamma chain is believed to be important in regulating ATPase activity and the flow of protons through the CF(0) complex. The sequence is that of ATP synthase gamma chain from Streptococcus pneumoniae (strain JJA).